A 354-amino-acid polypeptide reads, in one-letter code: Galactoside alpha-(1,2)-fucosyltransferase 2 (354 aa).

Residues 1-5 (MASAQ) lie on the Cytoplasmic side of the membrane. A helical; Signal-anchor for type II membrane protein membrane pass occupies residues 6–26 (VPFSFPLAHFLIFVFVTSTIT). At 27-354 (HLQQRIVKLQ…PADLSPLLKH (328 aa)) the chain is on the lumenal side. The tract at residues 43 to 68 (LPMTTQMSSGNTESPEMRRDSEQHGN) is disordered. A compositionally biased stretch (polar residues) spans 45–56 (MTTQMSSGNTES). The segment covering 57-68 (PEMRRDSEQHGN) has biased composition (basic and acidic residues). An N-linked (GlcNAc...) asparagine glycan is attached at asparagine 199.

It belongs to the glycosyltransferase 11 family. In terms of tissue distribution, specifically expressed in gut.

It localises to the golgi apparatus. Its subcellular location is the golgi stack membrane. It carries out the reaction a beta-D-galactosyl-(1-&gt;3)-N-acetyl-beta-D-glucosaminyl derivative + GDP-beta-L-fucose = an alpha-L-Fuc-(1-&gt;2)-beta-D-Gal-(1-&gt;3)-beta-D-GlcNAc derivative + GDP + H(+). It catalyses the reaction a beta-D-galactosyl-(1-&gt;4)-N-acetyl-beta-D-glucosaminyl derivative + GDP-beta-L-fucose = an alpha-L-Fuc-(1-&gt;2)-beta-D-Gal-(1-&gt;4)-beta-D-GlcNAc derivative + GDP + H(+). The catalysed reaction is a ganglioside GM1 (d18:1(4E)) + GDP-beta-L-fucose = a ganglioside Fuc-GM1 (d18:1(4E)) + GDP + H(+). The enzyme catalyses a globoside GalGb4Cer (d18:1(4E)) + GDP-beta-L-fucose = a globoside Globo-H (d18:1(4E)) + GDP + H(+). It carries out the reaction a neolactoside nLc4Cer + GDP-beta-L-fucose = a neolactoside IV(2)-alpha-Fuc-nLc4Cer + GDP + H(+). It catalyses the reaction a neolactoside nLc4Cer(d18:1(4E)) + GDP-beta-L-fucose = a neolactoside IV(2)-alpha-Fuc-nLc4Cer(d18:1(4E)) + GDP + H(+). The catalysed reaction is a ganglioside GM1 + GDP-beta-L-fucose = a ganglioside Fuc-GM1 + GDP + H(+). The enzyme catalyses a ganglioside GA1 + GDP-beta-L-fucose = a ganglioside Fuc-GA1 + GDP + H(+). It carries out the reaction Lc4Cer + GDP-beta-L-fucose = alpha-L-fucosyl-(1-&gt;2)-beta-D-galactosyl-(1-&gt;3)-N-acetyl-beta-D-glucosaminyl-(1-&gt;3)-beta-D-galactosyl-(1-&gt;4)-beta-D-glucosyl-(1&lt;-&gt;1')-ceramide + GDP + H(+). It catalyses the reaction a beta-D-Gal-(1-&gt;3)-beta-D-GlcNAc-(1-&gt;3)-beta-D-Gal-(1-&gt;4)-beta-D-Glc-(1&lt;-&gt;1')-Cer(d18:1(4E)) + GDP-beta-L-fucose = alpha-L-fucosyl-(1-&gt;2)- beta-D-galactosyl-(1-&gt;3)-N-acetyl-beta-D-glucosaminyl-(1-&gt;3)-beta-D-galactosyl-(1-&gt;4)-beta-D-glucosyl-(1&lt;-&gt;1')-N-acylsphing-4-enine + GDP + H(+). The catalysed reaction is a ganglioside GD1b + GDP-beta-L-fucose = a ganglioside Fuc-GD1b + GDP + H(+). The enzyme catalyses a lactoside III(4)-a-Fuc-Lc4Cer + GDP-beta-L-fucose = a lactoside IV(2),III(4)-a-[Fuc]2-Lc4Cer + GDP + H(+). It carries out the reaction beta-D-galactosyl-(1-&gt;3)-N-acetyl-D-galactosamine + GDP-beta-L-fucose = alpha-L-fucosyl-(1-&gt;2)-beta-D-galactosyl-(1-&gt;3)-N-acetyl-D-galactosamine + GDP + H(+). The protein operates within protein modification; protein glycosylation. Functionally, catalyzes the transfer of L-fucose, from a guanosine diphosphate-beta-L-fucose, to the terminal galactose on both O- and N-linked glycans chains of cell surface glycoproteins and glycolipids and the resulting epitope regulates several processes such as cell-cell interaction including host-microbe interaction, cell surface expression and cell proliferation. Preferentially fucosylates gangliosides GA1 and GM1 in the antrum, cecum and colon and in the female reproductive organs. Fucosylated host glycoproteins or glycolipids mediate interaction with intestinal microbiota influencing its composition. Creates a soluble precursor oligosaccharide FuC-alpha ((1,2)Galbeta-) called the H antigen which is an essential substrate for the final step in the soluble ABO blood group antigen synthesis pathway. In Rattus norvegicus (Rat), this protein is Galactoside alpha-(1,2)-fucosyltransferase 2.